The sequence spans 498 residues: Putative ABC transporter ATP-binding protein MM_2387 (498 aa).

ABC transporter domains are found at residues 2–242 (IELR…TSKS) and 258–490 (ISIK…VEEK). Residues 36–43 (GHSAAGKT) and 290–297 (GENGSGKT) each bind ATP.

This sequence belongs to the ABC transporter superfamily.

The protein resides in the cell membrane. Probably part of an ABC transporter complex. Responsible for energy coupling to the transport system. The sequence is that of Putative ABC transporter ATP-binding protein MM_2387 from Methanosarcina mazei (strain ATCC BAA-159 / DSM 3647 / Goe1 / Go1 / JCM 11833 / OCM 88) (Methanosarcina frisia).